The following is a 332-amino-acid chain: Ketol-acid reductoisomerase (NADP(+)) (332 aa).

In terms of domain architecture, KARI N-terminal Rossmann spans 2-182; the sequence is AKVYIDKDAS…GATRAGVIET (181 aa). NADP(+) is bound by residues 25–28, Ser53, and 83–86; these read YGSQ and DMVQ. His108 is an active-site residue. Gly134 is a binding site for NADP(+). The region spanning 183–328 is the KARI C-terminal knotted domain; the sequence is TFKEETETDL…RQIREISLRG (146 aa). 4 residues coordinate Mg(2+): Asp191, Glu195, Glu227, and Glu231. Ser252 lines the substrate pocket.

Belongs to the ketol-acid reductoisomerase family. Requires Mg(2+) as cofactor.

It carries out the reaction (2R)-2,3-dihydroxy-3-methylbutanoate + NADP(+) = (2S)-2-acetolactate + NADPH + H(+). The catalysed reaction is (2R,3R)-2,3-dihydroxy-3-methylpentanoate + NADP(+) = (S)-2-ethyl-2-hydroxy-3-oxobutanoate + NADPH + H(+). It functions in the pathway amino-acid biosynthesis; L-isoleucine biosynthesis; L-isoleucine from 2-oxobutanoate: step 2/4. The protein operates within amino-acid biosynthesis; L-valine biosynthesis; L-valine from pyruvate: step 2/4. In terms of biological role, involved in the biosynthesis of branched-chain amino acids (BCAA). Catalyzes an alkyl-migration followed by a ketol-acid reduction of (S)-2-acetolactate (S2AL) to yield (R)-2,3-dihydroxy-isovalerate. In the isomerase reaction, S2AL is rearranged via a Mg-dependent methyl migration to produce 3-hydroxy-3-methyl-2-ketobutyrate (HMKB). In the reductase reaction, this 2-ketoacid undergoes a metal-dependent reduction by NADPH to yield (R)-2,3-dihydroxy-isovalerate. The sequence is that of Ketol-acid reductoisomerase (NADP(+)) from Sulfurisphaera tokodaii (strain DSM 16993 / JCM 10545 / NBRC 100140 / 7) (Sulfolobus tokodaii).